The following is a 450-amino-acid chain: UDP-N-acetylmuramoylalanine--D-glutamate ligase (450 aa).

ATP is bound at residue 118–124 (GSNAKST).

It belongs to the MurCDEF family.

The protein localises to the cytoplasm. The catalysed reaction is UDP-N-acetyl-alpha-D-muramoyl-L-alanine + D-glutamate + ATP = UDP-N-acetyl-alpha-D-muramoyl-L-alanyl-D-glutamate + ADP + phosphate + H(+). It functions in the pathway cell wall biogenesis; peptidoglycan biosynthesis. Cell wall formation. Catalyzes the addition of glutamate to the nucleotide precursor UDP-N-acetylmuramoyl-L-alanine (UMA). The protein is UDP-N-acetylmuramoylalanine--D-glutamate ligase of Pseudomonas putida (strain ATCC 47054 / DSM 6125 / CFBP 8728 / NCIMB 11950 / KT2440).